A 395-amino-acid polypeptide reads, in one-letter code: Guanine nucleotide-binding protein subunit beta-5 (395 aa).

7 WD repeats span residues 103–142, 145–184, 193–234, 236–278, 279–318, 320–362, and 365–394; these read GHGNKVLCMDWCKDKRRIVSSSQDGKVIVWDSFTTNKEHA, MPCTWVMACAYAPSGCAIACGGLDNKCSVYPLTFDKNENM, MHTN…QSFH, HGAD…QAFE, THESDVNSVRYYPSGDAFASGSDDATCRLYDLRADREVAI, SKES…RVSI, and GHENRVSTLRVSPDGTAFCSGSWDHTLRVW.

This sequence belongs to the WD repeat G protein beta family. In terms of assembly, component of a complex composed of RGS9 (isoform RGS9-1), GNB5 and RGS9BP; within this complex, the presence of GNB5 stabilizes both itself and RGS9 and increases RGS9 GTPase-activating protein (GAP) activity. Interacts with RGS7, forming the RGS7-GNB5 complex; within this complex, the presence of GNB5 increases RGS7 GTPase-activating protein (GAP) activity. Interacts with GPR158; promotes the GTPase activator activity of the RGS7-GNB5 complex in absence of glycine, in contrast GTPase activator activity of the RGS7-GNB5 complex is inhibited in presence of glycine. Interacts with RGS6. In terms of tissue distribution, isoform 1 is only detected in retina. Isoform 2 is detected in brain (at protein level). Isoform 2 is detected in brain.

It is found in the membrane. Functionally, enhances GTPase-activating protein (GAP) activity of regulator of G protein signaling (RGS) proteins, such as RGS7 and RGS9, hence involved in the termination of the signaling initiated by the G protein coupled receptors (GPCRs) by accelerating the GTP hydrolysis on the G-alpha subunits, thereby promoting their inactivation. Increases RGS7 GTPase-activating protein (GAP) activity, thereby regulating mood and cognition. Increases RGS9 GTPase-activating protein (GAP) activity, hence contributes to the deactivation of G protein signaling initiated by D(2) dopamine receptors. May play an important role in neuronal signaling, including in the parasympathetic, but not sympathetic, control of heart rate. The sequence is that of Guanine nucleotide-binding protein subunit beta-5 (Gnb5) from Mus musculus (Mouse).